Consider the following 267-residue polypeptide: Thymidylate synthase (267 aa).

Arg24 is a binding site for dUMP. His54 is a (6R)-5,10-methylene-5,6,7,8-tetrahydrofolate binding site. 129-130 (RR) contacts dUMP. The active-site Nucleophile is Cys149. DUMP is bound by residues 169–172 (RSAD), Asn180, and 210–212 (HVY). Asp172 contacts (6R)-5,10-methylene-5,6,7,8-tetrahydrofolate. Ala266 provides a ligand contact to (6R)-5,10-methylene-5,6,7,8-tetrahydrofolate.

It belongs to the thymidylate synthase family. Bacterial-type ThyA subfamily. Homodimer.

It is found in the cytoplasm. It catalyses the reaction dUMP + (6R)-5,10-methylene-5,6,7,8-tetrahydrofolate = 7,8-dihydrofolate + dTMP. It participates in pyrimidine metabolism; dTTP biosynthesis. Its function is as follows. Catalyzes the reductive methylation of 2'-deoxyuridine-5'-monophosphate (dUMP) to 2'-deoxythymidine-5'-monophosphate (dTMP) while utilizing 5,10-methylenetetrahydrofolate (mTHF) as the methyl donor and reductant in the reaction, yielding dihydrofolate (DHF) as a by-product. This enzymatic reaction provides an intracellular de novo source of dTMP, an essential precursor for DNA biosynthesis. The chain is Thymidylate synthase from Paenarthrobacter aurescens (strain TC1).